The chain runs to 300 residues: Junctional adhesion molecule A (300 aa).

A signal peptide spans 1 to 26 (MGTEGKAGRKLLFLFTSMILGSLVQG). Residues 27–238 (KGSVYTAQSD…MDAVELNVGG (212 aa)) are Extracellular-facing. Ig-like V-type domains are found at residues 28–122 (GSVY…GEVS) and 134–230 (PTIS…AHMD). Asn42 is a glycosylation site (N-linked (GlcNAc...) asparagine). 2 disulfides stabilise this stretch: Cys49–Cys108 and Cys152–Cys212. Asn185 carries an N-linked (GlcNAc...) asparagine glycan. A helical transmembrane segment spans residues 239–259 (IVAAVLVTLILLGLLIFGVWF). Residues 260–299 (AYSRGYFERTKKGTAPGKKVIYSQPSTRSEGEFKQTSSFL) lie on the Cytoplasmic side of the membrane. Ser282, Ser285, and Ser288 each carry phosphoserine.

The protein belongs to the immunoglobulin superfamily. In terms of assembly, interacts with the ninth PDZ domain of MPDZ. Interacts with the first PDZ domain of PARD3. The association between PARD3 and PARD6B probably disrupts this interaction. Interacts with ITGAL (via I-domain). Interacts with CD151.

Its subcellular location is the cell junction. The protein resides in the tight junction. It is found in the cell membrane. In terms of biological role, seems to play a role in epithelial tight junction formation. Appears early in primordial forms of cell junctions and recruits PARD3. The association of the PARD6-PARD3 complex may prevent the interaction of PARD3 with JAM1, thereby preventing tight junction assembly. Plays a role in regulating monocyte transmigration involved in integrity of epithelial barrier. Ligand for integrin alpha-L/beta-2 involved in memory T-cell and neutrophil transmigration. Involved in platelet activation. In Mus musculus (Mouse), this protein is Junctional adhesion molecule A (F11r).